Here is a 121-residue protein sequence, read N- to C-terminus: Basic phospholipase A2 caudoxin (121 aa).

Cystine bridges form between Cys-25-Cys-114, Cys-27-Cys-43, Cys-42-Cys-94, Cys-48-Cys-121, Cys-49-Cys-87, Cys-56-Cys-80, and Cys-74-Cys-85. Residues Tyr-26, Gly-28, and Gly-30 each contribute to the Ca(2+) site. Residue His-46 is part of the active site. Residue Asp-47 participates in Ca(2+) binding. Asp-88 is an active-site residue.

It belongs to the phospholipase A2 family. Group II subfamily. D49 sub-subfamily. Monomer. Ca(2+) serves as cofactor. In terms of tissue distribution, expressed by the venom gland.

It is found in the secreted. It carries out the reaction a 1,2-diacyl-sn-glycero-3-phosphocholine + H2O = a 1-acyl-sn-glycero-3-phosphocholine + a fatty acid + H(+). Snake venom phospholipase A2 (PLA2) that shows anticoagulant activity and presynaptic neurotoxicity. Acts as an anticoagulant toxin by inhibiting prothrombinase complex formation. Shows about 50% of the prothrombinase complex inhibition compared to CM-IV of N.nigricollis venom. Acts as a neurotoxin by inhibiting neuromuscular transmission by blocking acetylcholine release from the nerve termini. PLA2 catalyzes the calcium-dependent hydrolysis of the 2-acyl groups in 3-sn-phosphoglycerides. The protein is Basic phospholipase A2 caudoxin of Bitis caudalis (Horned adder).